Consider the following 566-residue polypeptide: Beta,beta-carotene 15,15'-dioxygenase (566 aa).

Fe cation is bound by residues His172, His237, His308, and His514. The tract at residues 530-566 (PAETQEVENSDHPTDPTAPELSHSENDFTAGHGGSSL) is disordered.

The protein belongs to the carotenoid oxygenase family. Fe(2+) is required as a cofactor. In terms of tissue distribution, expressed in liver, kidney, small intestine and testis.

Its subcellular location is the cytoplasm. It localises to the cytosol. The catalysed reaction is all-trans-beta-carotene + O2 = 2 all-trans-retinal. The protein operates within cofactor metabolism; retinol metabolism. Its function is as follows. Symmetrically cleaves beta-carotene into two molecules of retinal using a dioxygenase mechanism. This Mus musculus (Mouse) protein is Beta,beta-carotene 15,15'-dioxygenase.